Reading from the N-terminus, the 352-residue chain is Pyrimidine monooxygenase RutA (352 aa).

FMN contacts are provided by residues 49-50 (IK), Asn-115, Glu-124, 140-141 (RY), and Ser-189.

It belongs to the NtaA/SnaA/DszA monooxygenase family. RutA subfamily.

The catalysed reaction is uracil + FMNH2 + NADH + O2 = (Z)-3-ureidoacrylate + FMN + NAD(+) + H2O + H(+). The enzyme catalyses thymine + FMNH2 + NADH + O2 = (Z)-2-methylureidoacrylate + FMN + NAD(+) + H2O + H(+). Catalyzes the pyrimidine ring opening between N-3 and C-4 by an unusual flavin hydroperoxide-catalyzed mechanism, adding oxygen atoms in the process to yield ureidoacrylate peracid, that immediately reacts with FMN forming ureidoacrylate and FMN-N(5)-oxide. The FMN-N(5)-oxide reacts spontaneously with NADH to produce FMN. Requires the flavin reductase RutF to regenerate FMN in vivo. This is Pyrimidine monooxygenase RutA from Caulobacter segnis (strain ATCC 21756 / DSM 7131 / JCM 7823 / NBRC 15250 / LMG 17158 / TK0059) (Mycoplana segnis).